A 317-amino-acid polypeptide reads, in one-letter code: Pantothenate kinase (317 aa).

95-102 (GSVAVGKS) contributes to the ATP binding site.

The protein belongs to the prokaryotic pantothenate kinase family.

Its subcellular location is the cytoplasm. It carries out the reaction (R)-pantothenate + ATP = (R)-4'-phosphopantothenate + ADP + H(+). It participates in cofactor biosynthesis; coenzyme A biosynthesis; CoA from (R)-pantothenate: step 1/5. This Rhodopseudomonas palustris (strain BisB18) protein is Pantothenate kinase.